The primary structure comprises 320 residues: Thiamine thiazole synthase (320 aa).

Substrate contacts are provided by residues Cys-82, 103–104 (EA), Gly-111, and Val-176. Cys-209 carries the post-translational modification 2,3-didehydroalanine (Cys). Residues Asp-211, His-226, Met-278, and 288–290 (RMG) contribute to the substrate site.

The protein belongs to the THI4 family. Homooctamer. Fe cation serves as cofactor. During the catalytic reaction, a sulfide is transferred from Cys-209 to a reaction intermediate, generating a dehydroalanine residue.

Its subcellular location is the cytoplasm. The protein localises to the nucleus. The enzyme catalyses [ADP-thiazole synthase]-L-cysteine + glycine + NAD(+) = [ADP-thiazole synthase]-dehydroalanine + ADP-5-ethyl-4-methylthiazole-2-carboxylate + nicotinamide + 3 H2O + 2 H(+). Functionally, involved in biosynthesis of the thiamine precursor thiazole. Catalyzes the conversion of NAD and glycine to adenosine diphosphate 5-(2-hydroxyethyl)-4-methylthiazole-2-carboxylic acid (ADT), an adenylated thiazole intermediate. The reaction includes an iron-dependent sulfide transfer from a conserved cysteine residue of the protein to a thiazole intermediate. The enzyme can only undergo a single turnover, which suggests it is a suicide enzyme. May have additional roles in adaptation to various stress conditions and in DNA damage tolerance. The polypeptide is Thiamine thiazole synthase (sti35) (Fusarium oxysporum f. sp. lycopersici (strain 4287 / CBS 123668 / FGSC 9935 / NRRL 34936) (Fusarium vascular wilt of tomato)).